The sequence spans 242 residues: Transcription factor bHLH100 (242 aa).

Residues 61-113 (MKKLNHNASERERRKKINTMFSSLRSCLPPTNQTKKLSVSATVSQALKYIPEL) enclose the bHLH domain.

As to quaternary structure, homodimer. Expressed constitutively in roots, leaves, and stems.

Its subcellular location is the nucleus. In terms of biological role, plays a role in metal homeostasis. Confers tolerance to high zinc (Zn) and nickel (Ni). The chain is Transcription factor bHLH100 (BHLH100) from Arabidopsis thaliana (Mouse-ear cress).